Here is a 270-residue protein sequence, read N- to C-terminus: NAD kinase (270 aa).

The active-site Proton acceptor is the D63. NAD(+) is bound by residues 63-64 (DG), R68, 131-132 (NE), K142, R159, D161, 172-177 (TAYAMS), A196, and Q230.

It belongs to the NAD kinase family. It depends on a divalent metal cation as a cofactor.

It localises to the cytoplasm. The enzyme catalyses NAD(+) + ATP = ADP + NADP(+) + H(+). Involved in the regulation of the intracellular balance of NAD and NADP, and is a key enzyme in the biosynthesis of NADP. Catalyzes specifically the phosphorylation on 2'-hydroxyl of the adenosine moiety of NAD to yield NADP. The chain is NAD kinase from Methanoregula boonei (strain DSM 21154 / JCM 14090 / 6A8).